A 72-amino-acid polypeptide reads, in one-letter code: Protein kish-A (72 aa).

An N-terminal signal peptide occupies residues 1–26 (MSAIFNFQSLLTVILLLICTCAYIRS). Over 27–53 (LAPSLLDKNKTGLLGIFWKCARIGERK) the chain is Extracellular. The N-linked (GlcNAc...) asparagine glycan is linked to asparagine 35. The helical transmembrane segment at 54 to 71 (SPYVAVCCVVMAFSILFV) threads the bilayer. Position 72 (glutamine 72) is a topological domain, cytoplasmic.

This sequence belongs to the KISH family.

It is found in the golgi apparatus membrane. Its function is as follows. Involved in the early part of the secretory pathway. The sequence is that of Protein kish-A (TMEM167A) from Gallus gallus (Chicken).